We begin with the raw amino-acid sequence, 239 residues long: Uracil-DNA glycosylase (239 aa).

Catalysis depends on aspartate 65, which acts as the Proton acceptor.

This sequence belongs to the uracil-DNA glycosylase (UDG) superfamily. UNG family.

The protein localises to the cytoplasm. It carries out the reaction Hydrolyzes single-stranded DNA or mismatched double-stranded DNA and polynucleotides, releasing free uracil.. Excises uracil residues from the DNA which can arise as a result of misincorporation of dUMP residues by DNA polymerase or due to deamination of cytosine. This is Uracil-DNA glycosylase from Levilactobacillus brevis (strain ATCC 367 / BCRC 12310 / CIP 105137 / JCM 1170 / LMG 11437 / NCIMB 947 / NCTC 947) (Lactobacillus brevis).